Here is a 126-residue protein sequence, read N- to C-terminus: Large ribosomal subunit protein bL12 (126 aa).

It belongs to the bacterial ribosomal protein bL12 family. In terms of assembly, homodimer. Part of the ribosomal stalk of the 50S ribosomal subunit. Forms a multimeric L10(L12)X complex, where L10 forms an elongated spine to which 2 to 4 L12 dimers bind in a sequential fashion. Binds GTP-bound translation factors.

In terms of biological role, forms part of the ribosomal stalk which helps the ribosome interact with GTP-bound translation factors. Is thus essential for accurate translation. The protein is Large ribosomal subunit protein bL12 of Chlorobium phaeobacteroides (strain BS1).